The primary structure comprises 92 residues: Small ribosomal subunit protein uS19 (92 aa).

The protein belongs to the universal ribosomal protein uS19 family.

Its function is as follows. Protein S19 forms a complex with S13 that binds strongly to the 16S ribosomal RNA. This is Small ribosomal subunit protein uS19 from Mesorhizobium japonicum (strain LMG 29417 / CECT 9101 / MAFF 303099) (Mesorhizobium loti (strain MAFF 303099)).